The chain runs to 346 residues: Golgi to ER traffic protein 4 (346 aa).

The interval 317–346 (GQNQGGSRRTPQGRSQSKTVEAPPASMELD) is disordered. Polar residues predominate over residues 321–335 (GGSRRTPQGRSQSKT).

It belongs to the GET4 family. Component of the get4/get5/sgt2 sorting complex.

Its subcellular location is the cytoplasm. Functionally, component of the get4/get5/sgt2 sorting complex involved in the GET (guided entry of TA proteins) pathway that leads to the insertion of tail-anchored (TA) proteins into the endoplasmic reticulum. Get4 and get5 form an obligate complex that catalyzes the transfer of tail-anchored proteins destined to the endoplasmic reticulum from sgt2 to the cytosolic targeting factor which then targets the TA protein to the ER membrane via get1/get2. The protein is Golgi to ER traffic protein 4 of Aspergillus fumigatus (strain ATCC MYA-4609 / CBS 101355 / FGSC A1100 / Af293) (Neosartorya fumigata).